The sequence spans 244 residues: Ubiquinone biosynthesis O-methyltransferase (244 aa).

4 residues coordinate S-adenosyl-L-methionine: Arg36, Gly60, Asp81, and Leu123.

The protein belongs to the methyltransferase superfamily. UbiG/COQ3 family.

It catalyses the reaction a 3-demethylubiquinol + S-adenosyl-L-methionine = a ubiquinol + S-adenosyl-L-homocysteine + H(+). It carries out the reaction a 3-(all-trans-polyprenyl)benzene-1,2-diol + S-adenosyl-L-methionine = a 2-methoxy-6-(all-trans-polyprenyl)phenol + S-adenosyl-L-homocysteine + H(+). It participates in cofactor biosynthesis; ubiquinone biosynthesis. Its function is as follows. O-methyltransferase that catalyzes the 2 O-methylation steps in the ubiquinone biosynthetic pathway. In Rickettsia felis (strain ATCC VR-1525 / URRWXCal2) (Rickettsia azadi), this protein is Ubiquinone biosynthesis O-methyltransferase.